The following is a 117-amino-acid chain: Small ribosomal subunit protein uS19c (117 aa).

The protein belongs to the universal ribosomal protein uS19 family.

The protein localises to the plastid. In terms of biological role, protein S19 forms a complex with S13 that binds strongly to the 16S ribosomal RNA. This Helicosporidium sp. subsp. Simulium jonesii (Green alga) protein is Small ribosomal subunit protein uS19c (rps19).